Consider the following 425-residue polypeptide: Tyrosine--tRNA ligase (425 aa).

Position 37 (tyrosine 37) interacts with L-tyrosine. Positions proline 42–histidine 51 match the 'HIGH' region motif. Residues tyrosine 175 and glutamine 179 each contribute to the L-tyrosine site. The short motif at lysine 235 to threonine 239 is the 'KMSKS' region element. Lysine 238 contributes to the ATP binding site. The 58-residue stretch at alanine 357–glycine 414 folds into the S4 RNA-binding domain.

It belongs to the class-I aminoacyl-tRNA synthetase family. TyrS type 1 subfamily. As to quaternary structure, homodimer.

The protein localises to the cytoplasm. The enzyme catalyses tRNA(Tyr) + L-tyrosine + ATP = L-tyrosyl-tRNA(Tyr) + AMP + diphosphate + H(+). Functionally, catalyzes the attachment of tyrosine to tRNA(Tyr) in a two-step reaction: tyrosine is first activated by ATP to form Tyr-AMP and then transferred to the acceptor end of tRNA(Tyr). This is Tyrosine--tRNA ligase from Pectobacterium carotovorum subsp. carotovorum (strain PC1).